A 211-amino-acid polypeptide reads, in one-letter code: Peptide methionine sulfoxide reductase MsrA (211 aa).

Cysteine 60 is an active-site residue.

Belongs to the MsrA Met sulfoxide reductase family.

The enzyme catalyses L-methionyl-[protein] + [thioredoxin]-disulfide + H2O = L-methionyl-(S)-S-oxide-[protein] + [thioredoxin]-dithiol. It catalyses the reaction [thioredoxin]-disulfide + L-methionine + H2O = L-methionine (S)-S-oxide + [thioredoxin]-dithiol. Functionally, has an important function as a repair enzyme for proteins that have been inactivated by oxidation. Catalyzes the reversible oxidation-reduction of methionine sulfoxide in proteins to methionine. This is Peptide methionine sulfoxide reductase MsrA from Methanosarcina mazei (strain ATCC BAA-159 / DSM 3647 / Goe1 / Go1 / JCM 11833 / OCM 88) (Methanosarcina frisia).